Reading from the N-terminus, the 718-residue chain is Cyclic-di-AMP phosphodiesterase PgpH (718 aa).

Residues 1 to 17 lie on the Cytoplasmic side of the membrane; sequence MKLAKKWRDWYIESGKK. Residues 18–38 form a helical membrane-spanning segment; sequence YLFPLLLVCFAVIAYFLVCQM. At 39 to 289 the chain is on the extracellular side; it reads TKPESYNVKL…MLHLLDQKMP (251 aa). A compositionally biased stretch (basic and acidic residues) spans 112-127; that stretch reads QEKDTKNKEKAKKENK. The tract at residues 112-140 is disordered; the sequence is QEKDTKNKEKAKKENKPAPAPTSTEDKLK. The chain crosses the membrane as a helical span at residues 290–310; that stretch reads VKQYAGFAIFIIALAAILFLY. Residues 311–324 lie on the Cytoplasmic side of the membrane; it reads TKKQTQPKAKKMQT. Residues 325–345 form a helical membrane-spanning segment; that stretch reads MLIFSSVYLVSLFMLFIILFL. The Extracellular portion of the chain corresponds to 346 to 349; sequence ETQN. 2 helical membrane-spanning segments follow: residues 350–370 and 371–391; these read IANI…KILL and NEKY…LTFQ. Position 392 (asparagine 392) is a topological domain, extracellular. A helical membrane pass occupies residues 393-413; that stretch reads DATSGITIFILLSGATSVVML. The Cytoplasmic segment spans residues 414–421; the sequence is RDYSRRSA. A helical transmembrane segment spans residues 422–442; that stretch reads IMLSGFMVGLINMIYVLLLLL. The Extracellular segment spans residues 443 to 457; it reads INNSTLLQVSTLMAL. Residues 458 to 478 form a helical membrane-spanning segment; that stretch reads GYAFLGGFGAFILGVGVIPLF. The Cytoplasmic portion of the chain corresponds to 479–718; that stretch reads ETIFGLLTTS…QRIQYPDDKD (240 aa). The HD domain maps to 511–653; sequence TYHHSMMVAN…INISDSVEAA (143 aa). Mn(2+)-binding residues include histidine 514, histidine 543, and aspartate 544. Residue histidine 514 coordinates substrate. Residues 544–547 and 555–556 contribute to the substrate site; these read DIGK and VE. 3 residues coordinate Mn(2+): histidine 580, histidine 604, and histidine 605. Substrate is bound by residues tyrosine 631 and aspartate 648. Mn(2+) is bound at residue aspartate 648.

The protein belongs to the PgpH phosphodiesterase family. Mn(2+) is required as a cofactor.

The protein localises to the cell membrane. The enzyme catalyses 3',3'-c-di-AMP + H2O = 5'-O-phosphonoadenylyl-(3'-&gt;5')-adenosine + H(+). C-di-AMP hydrolysis inhibited by ppGpp, without altering c-di-AMP binding. Its function is as follows. A phosphodiesterase (PDE) that hydrolyzes cyclic di-3',5'-adenylate (c-di-AMP); there are at least 2 PDEs for c-di-AMP in this bacteria (this and pdeA), this may be the major PDE for growth in liquid culture. During host infection c-di-AMP is secreted into the host cytoplasm which leads to interferon-beta production and secretion by the host. The cytoplasmic HD domain binds and hydrolyzes c-di-AMP to 5'-pApA; has very low activity against c-di-GMP, does not hydrolyze ppGpp. The chain is Cyclic-di-AMP phosphodiesterase PgpH from Listeria monocytogenes serotype 1/2a (strain 10403S).